Reading from the N-terminus, the 671-residue chain is UvrABC system protein B (671 aa).

Residues 25-412 enclose the Helicase ATP-binding domain; the sequence is EGIEAGLSHQ…AGRVVEQVVR (388 aa). Residue 38–45 coordinates ATP; it reads GVTGSGKT. The Beta-hairpin signature appears at 91–114; it reads YYDYYQPEAYVPSSDTFIEKDASI. The region spanning 429–582 is the Helicase C-terminal domain; it reads QVDDLLSEIR…QIAFNEANGI (154 aa). One can recognise a UVR domain in the interval 632 to 667; the sequence is TKRIKQLEEKMMQFARDLEFEAAAQLRDEIAQLRER.

This sequence belongs to the UvrB family. In terms of assembly, forms a heterotetramer with UvrA during the search for lesions. Interacts with UvrC in an incision complex.

Its subcellular location is the cytoplasm. In terms of biological role, the UvrABC repair system catalyzes the recognition and processing of DNA lesions. A damage recognition complex composed of 2 UvrA and 2 UvrB subunits scans DNA for abnormalities. Upon binding of the UvrA(2)B(2) complex to a putative damaged site, the DNA wraps around one UvrB monomer. DNA wrap is dependent on ATP binding by UvrB and probably causes local melting of the DNA helix, facilitating insertion of UvrB beta-hairpin between the DNA strands. Then UvrB probes one DNA strand for the presence of a lesion. If a lesion is found the UvrA subunits dissociate and the UvrB-DNA preincision complex is formed. This complex is subsequently bound by UvrC and the second UvrB is released. If no lesion is found, the DNA wraps around the other UvrB subunit that will check the other stand for damage. This is UvrABC system protein B from Pseudomonas putida (strain ATCC 47054 / DSM 6125 / CFBP 8728 / NCIMB 11950 / KT2440).